The chain runs to 123 residues: Large ribosomal subunit protein bL17 (123 aa).

Belongs to the bacterial ribosomal protein bL17 family. As to quaternary structure, part of the 50S ribosomal subunit. Contacts protein L32.

In Borreliella burgdorferi (strain ZS7) (Borrelia burgdorferi), this protein is Large ribosomal subunit protein bL17.